We begin with the raw amino-acid sequence, 197 residues long: MIASIRGILIAVAADHVVVETGGIGWMIYAPRPVIAALGDIGATVRLFTYLLVREDSLTLYGFETVEQRQLFETLLSVTGVGPQAALNLLSSGTTDELRLAIATGDVTRLARTPRIGKKLAERLVLELKGKINVKGLPTGAAVTPAVAAANAELSEALISLGFTDAEAAAAIAALPSDAPPDLEERVRLALRYFSAS.

A domain I region spans residues 1-64 (MIASIRGILI…EDSLTLYGFE (64 aa)). Residues 65–145 (TVEQRQLFET…GLPTGAAVTP (81 aa)) form a domain II region. The interval 146–148 (AVA) is flexible linker. Residues 148 to 197 (AAANAELSEALISLGFTDAEAAAAIAALPSDAPPDLEERVRLALRYFSAS) are domain III.

This sequence belongs to the RuvA family. As to quaternary structure, homotetramer. Forms an RuvA(8)-RuvB(12)-Holliday junction (HJ) complex. HJ DNA is sandwiched between 2 RuvA tetramers; dsDNA enters through RuvA and exits via RuvB. An RuvB hexamer assembles on each DNA strand where it exits the tetramer. Each RuvB hexamer is contacted by two RuvA subunits (via domain III) on 2 adjacent RuvB subunits; this complex drives branch migration. In the full resolvosome a probable DNA-RuvA(4)-RuvB(12)-RuvC(2) complex forms which resolves the HJ.

It is found in the cytoplasm. The RuvA-RuvB-RuvC complex processes Holliday junction (HJ) DNA during genetic recombination and DNA repair, while the RuvA-RuvB complex plays an important role in the rescue of blocked DNA replication forks via replication fork reversal (RFR). RuvA specifically binds to HJ cruciform DNA, conferring on it an open structure. The RuvB hexamer acts as an ATP-dependent pump, pulling dsDNA into and through the RuvAB complex. HJ branch migration allows RuvC to scan DNA until it finds its consensus sequence, where it cleaves and resolves the cruciform DNA. This chain is Holliday junction branch migration complex subunit RuvA, found in Roseiflexus sp. (strain RS-1).